A 274-amino-acid polypeptide reads, in one-letter code: MDRTRKQCSVLAFTDDAVLPVSTIVNAVRELGNEGAEQCDPQVVTQASSLSKLPVDSSSMDIVISICRSLQFQGDFLFEEISRVLKPGGTVLIYKTLQSVAEGTSEAVLALERKLLLAGFLEAQGLQLNSLELSGLDHSFGMKAKKPSWKIGSSFALKKSTKGSVKVNLDDDLIDEDSLLTEEDMKKPPIAPGGDCEVGSTRKACKNCTCGRAEAEEKVKLGPTMEQLNNPQSACGSCGLGDAFRCSTCPYKGLPPFKLGEKVSLSGNFLAADI.

The interval 1–154 is N-terminal SAM-like domain; the sequence is MDRTRKQCSV…KKPSWKIGSS (154 aa). The tract at residues 154-185 is linker; the sequence is SFALKKSTKGSVKVNLDDDLIDEDSLLTEEDM. The [2Fe-2S] cluster site is built by Cys196, Cys205, Cys208, and Cys210. Residues 196–210 are fe-S binding site A; sequence CEVGSTRKACKNCTC. Cys235, Cys238, Cys246, and Cys249 together coordinate [4Fe-4S] cluster. 2 short sequence motifs (cx2C motif) span residues 235 to 238 and 246 to 249; these read CGSC and CSTC. A fe-S binding site B region spans residues 235 to 249; sequence CGSCGLGDAFRCSTC.

It belongs to the anamorsin family. Monomer. It depends on [2Fe-2S] cluster as a cofactor. [4Fe-4S] cluster serves as cofactor.

It localises to the cytoplasm. Its subcellular location is the mitochondrion intermembrane space. Functionally, component of the cytosolic iron-sulfur (Fe-S) protein assembly (CIA) machinery. Required for the maturation of extramitochondrial Fe-S proteins. Part of an electron transfer chain functioning in an early step of cytosolic Fe-S biogenesis, facilitating the de novo assembly of a [4Fe-4S] cluster on the cytosolic Fe-S scaffold complex. Electrons are transferred from NADPH via a FAD- and FMN-containing diflavin oxidoreductase. Together with the diflavin oxidoreductase, also required for the assembly of the diferric tyrosyl radical cofactor of ribonucleotide reductase (RNR), probably by providing electrons for reduction during radical cofactor maturation in the catalytic small subunit. In Ricinus communis (Castor bean), this protein is Anamorsin homolog.